A 291-amino-acid chain; its full sequence is N-acetylmannosamine kinase (291 aa).

ATP is bound by residues 5–12 and 132–139; these read AIDIGGTK and GVGGGVVS. Zn(2+) is bound by residues His-156, Cys-166, Cys-168, and Cys-173.

Belongs to the ROK (NagC/XylR) family. NanK subfamily. Homodimer.

It carries out the reaction an N-acyl-D-mannosamine + ATP = an N-acyl-D-mannosamine 6-phosphate + ADP + H(+). Its pathway is amino-sugar metabolism; N-acetylneuraminate degradation; D-fructose 6-phosphate from N-acetylneuraminate: step 2/5. Functionally, catalyzes the phosphorylation of N-acetylmannosamine (ManNAc) to ManNAc-6-P. The polypeptide is N-acetylmannosamine kinase (Escherichia coli O1:K1 / APEC).